We begin with the raw amino-acid sequence, 402 residues long: Probable tRNA pseudouridine synthase D (402 aa).

Asp-94 serves as the catalytic Nucleophile. Residues 175 to 364 (YILNYYGTQR…PGTRRKLITK (190 aa)) form the TRUD domain.

Belongs to the pseudouridine synthase TruD family.

It catalyses the reaction uridine(13) in tRNA = pseudouridine(13) in tRNA. Functionally, could be responsible for synthesis of pseudouridine from uracil-13 in transfer RNAs. This is Probable tRNA pseudouridine synthase D from Methanococcus aeolicus (strain ATCC BAA-1280 / DSM 17508 / OCM 812 / Nankai-3).